Here is a 99-residue protein sequence, read N- to C-terminus: Plastocyanin A'/A'' (99 aa).

The region spanning 1-99 (IEVLLGSDDG…AGMVGKVTVN (99 aa)) is the Plastocyanin-like domain. 4 residues coordinate Cu cation: His37, Cys84, His87, and Met92.

The protein belongs to the plastocyanin family. Cu(2+) serves as cofactor.

The protein localises to the plastid. Its subcellular location is the chloroplast thylakoid membrane. In terms of biological role, participates in electron transfer between P700 and the cytochrome b6-f complex in photosystem I. The polypeptide is Plastocyanin A'/A'' (Nicotiana tabacum (Common tobacco)).